The following is a 240-amino-acid chain: UDP-2,3-diacylglucosamine hydrolase (240 aa).

Residues aspartate 8, histidine 10, aspartate 41, asparagine 79, and histidine 114 each contribute to the Mn(2+) site. A substrate-binding site is contributed by 79–80; sequence NR. Positions 122, 160, 164, 167, and 195 each coordinate substrate. Positions 195 and 197 each coordinate Mn(2+).

Belongs to the LpxH family. It depends on Mn(2+) as a cofactor.

It localises to the cell inner membrane. The enzyme catalyses UDP-2-N,3-O-bis[(3R)-3-hydroxytetradecanoyl]-alpha-D-glucosamine + H2O = 2-N,3-O-bis[(3R)-3-hydroxytetradecanoyl]-alpha-D-glucosaminyl 1-phosphate + UMP + 2 H(+). Its pathway is glycolipid biosynthesis; lipid IV(A) biosynthesis; lipid IV(A) from (3R)-3-hydroxytetradecanoyl-[acyl-carrier-protein] and UDP-N-acetyl-alpha-D-glucosamine: step 4/6. Hydrolyzes the pyrophosphate bond of UDP-2,3-diacylglucosamine to yield 2,3-diacylglucosamine 1-phosphate (lipid X) and UMP by catalyzing the attack of water at the alpha-P atom. Involved in the biosynthesis of lipid A, a phosphorylated glycolipid that anchors the lipopolysaccharide to the outer membrane of the cell. This is UDP-2,3-diacylglucosamine hydrolase from Cellvibrio japonicus (strain Ueda107) (Pseudomonas fluorescens subsp. cellulosa).